A 413-amino-acid chain; its full sequence is MTPSISWCLLLLAGLCCLVPSFLAEDVQETDTSQKDQSPASHEIATNLGDFAISLYRELVHQSNTSNIFFSPVSIATAFAMLSLGSKGDTHTQILEGLQFNLTQTSEADIHNSFQHLLQTLNRPDSELQLSTGNGLFVNNDLKLVEKFLEEAKNHYQAEVFSVNFAESEEAKKVINDFVEKGTQGKIVEAVKKLEQDTVFVLANYILFKGKWKKPFDPENTKQAEFHVDESTTVKVPMMTLSGMLDVHHCSTLSSWVLLMDYAGNATAVFLLPDDGKMQHLEQTLNKELISKFLLNRRRRLAQIHIPRLSISGNYNLETLMSPLGITRIFNSGADLSGITEENAPLKLSQAVHKAVLTIDETGTEAAAATVLQGGFLSMPPILHFNRPFLFIIFEEHSQSPLFVGKVVDPTHK.

The N-terminal stretch at 1 to 24 is a signal peptide; that stretch reads MTPSISWCLLLLAGLCCLVPSFLA. Asn-64, Asn-101, and Asn-265 each carry an N-linked (GlcNAc...) asparagine glycan. The tract at residues 368–387 is RCL; the sequence is AATVLQGGFLSMPPILHFNR.

It belongs to the serpin family.

The protein resides in the secreted. Does not inhibit elastase or chymotrypsin. No target protease has been identified to date. The chain is Alpha-1-antitrypsin 1-5 (Serpina1e) from Mus musculus (Mouse).